The following is a 444-amino-acid chain: Enolase 2 (444 aa).

Substrate contacts are provided by histidine 165 and glutamate 174. Glutamate 217 (proton donor) is an active-site residue. Aspartate 252, glutamate 303, and aspartate 330 together coordinate Mg(2+). Substrate is bound by residues glutamate 303 and aspartate 330. Lysine 355 functions as the Proton acceptor in the catalytic mechanism. Substrate is bound by residues 382-385 and lysine 406; that span reads SHRS.

Belongs to the enolase family. In terms of assembly, homodimer. Requires Mg(2+) as cofactor.

The protein resides in the cytoplasm. The enzyme catalyses (2R)-2-phosphoglycerate = phosphoenolpyruvate + H2O. It functions in the pathway carbohydrate degradation; glycolysis; pyruvate from D-glyceraldehyde 3-phosphate: step 4/5. This Toxoplasma gondii protein is Enolase 2 (ENO2).